Here is a 572-residue protein sequence, read N- to C-terminus: Arginine--tRNA ligase (572 aa).

The short motif at 122 to 132 (PNLAKEMHVGH) is the 'HIGH' region element.

It belongs to the class-I aminoacyl-tRNA synthetase family. As to quaternary structure, monomer.

It localises to the cytoplasm. It carries out the reaction tRNA(Arg) + L-arginine + ATP = L-arginyl-tRNA(Arg) + AMP + diphosphate. The sequence is that of Arginine--tRNA ligase from Neisseria meningitidis serogroup C / serotype 2a (strain ATCC 700532 / DSM 15464 / FAM18).